We begin with the raw amino-acid sequence, 335 residues long: Anthranilate phosphoribosyltransferase (335 aa).

5-phospho-alpha-D-ribose 1-diphosphate is bound by residues G79, 82-83, T87, 89-92, 107-115, and S119; these read GD, NVST, and KHCNKGVSS. Residue G79 participates in anthranilate binding. S91 lines the Mg(2+) pocket. N110 contacts anthranilate. An anthranilate-binding site is contributed by R165. Mg(2+) is bound by residues D223 and E224.

The protein belongs to the anthranilate phosphoribosyltransferase family. Homodimer. Mg(2+) serves as cofactor.

The catalysed reaction is N-(5-phospho-beta-D-ribosyl)anthranilate + diphosphate = 5-phospho-alpha-D-ribose 1-diphosphate + anthranilate. Its pathway is amino-acid biosynthesis; L-tryptophan biosynthesis; L-tryptophan from chorismate: step 2/5. Catalyzes the transfer of the phosphoribosyl group of 5-phosphorylribose-1-pyrophosphate (PRPP) to anthranilate to yield N-(5'-phosphoribosyl)-anthranilate (PRA). The sequence is that of Anthranilate phosphoribosyltransferase from Buchnera aphidicola subsp. Schizaphis graminum (strain Sg).